The following is a 213-amino-acid chain: Probable anti-sigma-F factor NrsF (213 aa).

6 helical membrane-spanning segments follow: residues 27 to 47 (ALAI…LLQV), 51 to 71 (LGLA…TCLA), 91 to 111 (VPAA…FTLI), 126 to 146 (TWKS…AAVL), 159 to 179 (LAGF…YCLH), and 187 to 207 (FIGF…VLLG).

This sequence belongs to the NrsF anti-sigma-F factor family.

The protein localises to the cell inner membrane. Functionally, probably an anti-sigma factor for extracytoplasmic function (ECF) sigma factor sigma-F (SigF), which responds to (hypo)chlorite. ECF sigma factors are held in an inactive form by a cognate anti-sigma factor. This chain is Probable anti-sigma-F factor NrsF, found in Azospira oryzae (strain ATCC BAA-33 / DSM 13638 / PS) (Dechlorosoma suillum).